Here is a 372-residue protein sequence, read N- to C-terminus: Chorismate synthase (372 aa).

Arg-48 lines the NADP(+) pocket. FMN contacts are provided by residues 131 to 133 (RSS), 243 to 244 (NA), Gly-288, 303 to 307 (KPTSS), and Arg-329.

It belongs to the chorismate synthase family. In terms of assembly, homotetramer. FMNH2 is required as a cofactor.

The catalysed reaction is 5-O-(1-carboxyvinyl)-3-phosphoshikimate = chorismate + phosphate. It functions in the pathway metabolic intermediate biosynthesis; chorismate biosynthesis; chorismate from D-erythrose 4-phosphate and phosphoenolpyruvate: step 7/7. Catalyzes the anti-1,4-elimination of the C-3 phosphate and the C-6 proR hydrogen from 5-enolpyruvylshikimate-3-phosphate (EPSP) to yield chorismate, which is the branch point compound that serves as the starting substrate for the three terminal pathways of aromatic amino acid biosynthesis. This reaction introduces a second double bond into the aromatic ring system. This Caulobacter vibrioides (strain ATCC 19089 / CIP 103742 / CB 15) (Caulobacter crescentus) protein is Chorismate synthase.